We begin with the raw amino-acid sequence, 556 residues long: MLNLCHALRGVRQFSCSVIVKVKCASCSIKLQDQDPSKPGYYTKPKSLPDSKLNPDLQDLKYLLFSQDIQLSKQATQNDPDLKTKRDLLLRVICKRCSNALHHNNYNPEEFPESTLNDILNYVPRGSNVMHIVPFVEFPLHLDPNVLKRNDLDTTLVLTKSDQVFKDKNAVSKKVPIFMKQFLKNTLRIDSNKTFAISALKNWNISMFYNYFKNYTYLLGNPNVGKSTLINTLLQKYLGYKVKIDSTGKINSPSEEVMQEAFTNPKNFFKIQAAGVSHIPNLTRSVQAYQVGGKILFDLPGYSTSTSRLRLEELIDERWLQRLRKTDLFNRKHIKQKTYESMKGTSQGGCYTVGGIFYLVPPKGSINQIVKYIPGPSKTFKNIEKGIDVFNSCNSSSGTHPLSRYCGIKSVICEKSQYKRYAIPPFIGSIEIVLKDIGYILLRTTGRYEFKGLHEIWIPRGIQVGIREPLENLIESGYQRYIETNGKESSCPRDRPIISSLYEMAPDEADTLNAVKKSYLEKTEKDLSARRFVDDDPYDLVQHLEKKKNPYWYYQW.

The transit peptide at 1–21 (MLNLCHALRGVRQFSCSVIVK) directs the protein to the mitochondrion. A CP-type G domain is found at 113–305 (ESTLNDILNY…LFDLPGYSTS (193 aa)).

This sequence belongs to the TRAFAC class YlqF/YawG GTPase family. GEP3 subfamily.

The protein localises to the mitochondrion. Interacts genetically with prohibitins and thus may be involved in the mitochondrial lipid metabolism. In Saccharomyces cerevisiae (strain ATCC 204508 / S288c) (Baker's yeast), this protein is Genetic interactor of prohibitins 3, mitochondrial (GEP3).